The following is a 61-amino-acid chain: Small ribosomal subunit protein uS14 (61 aa).

Cys-24, Cys-27, Cys-40, and Cys-43 together coordinate Zn(2+).

This sequence belongs to the universal ribosomal protein uS14 family. Zinc-binding uS14 subfamily. Part of the 30S ribosomal subunit. Contacts proteins S3 and S10. It depends on Zn(2+) as a cofactor.

In terms of biological role, binds 16S rRNA, required for the assembly of 30S particles and may also be responsible for determining the conformation of the 16S rRNA at the A site. In Symbiobacterium thermophilum (strain DSM 24528 / JCM 14929 / IAM 14863 / T), this protein is Small ribosomal subunit protein uS14.